The sequence spans 137 residues: Large-conductance mechanosensitive channel (137 aa).

Transmembrane regions (helical) follow at residues 9-29 and 79-99; these read AFAV…GAAF and IQTV…VKAI.

This sequence belongs to the MscL family. In terms of assembly, homopentamer.

Its subcellular location is the cell inner membrane. Its function is as follows. Channel that opens in response to stretch forces in the membrane lipid bilayer. May participate in the regulation of osmotic pressure changes within the cell. In Pseudomonas aeruginosa (strain ATCC 15692 / DSM 22644 / CIP 104116 / JCM 14847 / LMG 12228 / 1C / PRS 101 / PAO1), this protein is Large-conductance mechanosensitive channel.